A 373-amino-acid polypeptide reads, in one-letter code: Putative zinc finger protein 012R (373 aa).

Residues 2–29 (FECTHCDLHFESKSKLATHQKTKKCTAH) form a C2H2-type zinc finger.

This sequence belongs to the IIV-6 302L family.

This Invertebrate iridescent virus 3 (IIV-3) protein is Putative zinc finger protein 012R.